A 213-amino-acid chain; its full sequence is Holliday junction resolvase RecU (213 aa).

4 residues coordinate Mg(2+): Thr99, Asp101, Glu114, and Gln133.

This sequence belongs to the RecU family. Mg(2+) is required as a cofactor.

Its subcellular location is the cytoplasm. It catalyses the reaction Endonucleolytic cleavage at a junction such as a reciprocal single-stranded crossover between two homologous DNA duplexes (Holliday junction).. Functionally, endonuclease that resolves Holliday junction intermediates in genetic recombination. Cleaves mobile four-strand junctions by introducing symmetrical nicks in paired strands. Promotes annealing of linear ssDNA with homologous dsDNA. Required for DNA repair, homologous recombination and chromosome segregation. In Lactococcus lactis subsp. cremoris (strain SK11), this protein is Holliday junction resolvase RecU.